Reading from the N-terminus, the 815-residue chain is Leucine--tRNA ligase (815 aa).

Residues 42-52 carry the 'HIGH' region motif; it reads PYPSGRLHMGH. Residues 571–575 carry the 'KMSKS' region motif; that stretch reads KMSKS. An ATP-binding site is contributed by K574.

Belongs to the class-I aminoacyl-tRNA synthetase family.

Its subcellular location is the cytoplasm. It catalyses the reaction tRNA(Leu) + L-leucine + ATP = L-leucyl-tRNA(Leu) + AMP + diphosphate. In Vesicomyosocius okutanii subsp. Calyptogena okutanii (strain HA), this protein is Leucine--tRNA ligase.